The chain runs to 115 residues: MGDNNRATFSNDPAANAPDAAAVEKGKGKAVEEPALEMSMDEDEESEESEAEEIEDDEDDHDNLEPISQSNIIAGGRRTRGKTIDFQEAAEKLKDEMDEDDDDEDFEPNDNDMRN.

The segment covering 1–10 (MGDNNRATFS) has biased composition (polar residues). The segment at 1–115 (MGDNNRATFS…FEPNDNDMRN (115 aa)) is disordered. A compositionally biased stretch (low complexity) spans 11-21 (NDPAANAPDAA). Residues 22–32 (AVEKGKGKAVE) are compositionally biased toward basic and acidic residues. Over residues 39–62 (SMDEDEESEESEAEEIEDDEDDHD) the composition is skewed to acidic residues. Basic and acidic residues predominate over residues 82–95 (KTIDFQEAAEKLKD). Positions 96-115 (EMDEDDDDEDFEPNDNDMRN) are enriched in acidic residues.

The protein belongs to the CHZ1 family. As to quaternary structure, forms a heterotrimer with H2A.Z-H2B, stabilizing the association of the histone dimer. Also, with a lower affinity, forms a heterotrimer with H2A-H2B.

It localises to the nucleus. In terms of biological role, forms a chaperone-bound H2A.Z-H2B complex that acts as a source for SWR1 complex-dependent H2A to H2A.Z histone replacement in chromatin. This is Histone H2A.Z-specific chaperone chz1 (chz1) from Aspergillus clavatus (strain ATCC 1007 / CBS 513.65 / DSM 816 / NCTC 3887 / NRRL 1 / QM 1276 / 107).